We begin with the raw amino-acid sequence, 334 residues long: DNA-directed RNA polymerase subunit alpha (334 aa).

The interval 1–231 (MNMIKIEPYI…KQMSIFGVDL (231 aa)) is alpha N-terminal domain (alpha-NTD). An alpha C-terminal domain (alpha-CTD) region spans residues 247 to 334 (ELKTLMIKID…NRKLAKLKSN (88 aa)).

It belongs to the RNA polymerase alpha chain family. As to quaternary structure, homodimer. The RNAP catalytic core consists of 2 alpha, 1 beta/beta' and 1 omega subunit. When a sigma factor is associated with the core the holoenzyme is formed, which can initiate transcription.

The catalysed reaction is RNA(n) + a ribonucleoside 5'-triphosphate = RNA(n+1) + diphosphate. In terms of biological role, DNA-dependent RNA polymerase catalyzes the transcription of DNA into RNA using the four ribonucleoside triphosphates as substrates. This is DNA-directed RNA polymerase subunit alpha from Helicobacter hepaticus (strain ATCC 51449 / 3B1).